The sequence spans 562 residues: Valerena-4,7(11)-diene synthase (562 aa).

D314, D318, and E467 together coordinate Mg(2+). The DDXXD motif motif lies at 314 to 318 (DDTYD).

Belongs to the terpene synthase family. Requires Mg(2+) as cofactor. As to expression, predominantly expressed in root.

The enzyme catalyses (2E,6E)-farnesyl diphosphate = valerena-4,7(11)-diene + diphosphate. Catalyzes formation of valerena-4,7(11)-diene, one of the active ingredients responsible for the sedative effect extracted from Valeriana officinalis root. The chain is Valerena-4,7(11)-diene synthase (TPS2) from Valeriana officinalis (Valerian).